Consider the following 394-residue polypeptide: Elongation factor Tu 2 (394 aa).

In terms of domain architecture, tr-type G spans 10–204 (KPHVNVGTIG…ALDTYIPEPE (195 aa)). Residues 19–26 (GHVDHGKT) are G1. Residue 19-26 (GHVDHGKT) coordinates GTP. A Mg(2+)-binding site is contributed by threonine 26. Residues 60-64 (GITIS) form a G2 region. The G3 stretch occupies residues 81-84 (DCPG). GTP contacts are provided by residues 81-85 (DCPGH) and 136-139 (NKCD). The G4 stretch occupies residues 136-139 (NKCD). Residues 174 to 176 (SAL) form a G5 region.

Belongs to the TRAFAC class translation factor GTPase superfamily. Classic translation factor GTPase family. EF-Tu/EF-1A subfamily. Monomer.

It localises to the cytoplasm. It catalyses the reaction GTP + H2O = GDP + phosphate + H(+). Its function is as follows. GTP hydrolase that promotes the GTP-dependent binding of aminoacyl-tRNA to the A-site of ribosomes during protein biosynthesis. The chain is Elongation factor Tu 2 from Vibrio vulnificus (strain CMCP6).